We begin with the raw amino-acid sequence, 458 residues long: Cell death abnormality protein 8 (458 aa).

Residues 1–45 (MFLKKHKSKLLLVPRDEEQEDAGIVAVLTDRIPSVLLVRWFDLFC) lie on the Cytoplasmic side of the membrane. A helical transmembrane segment spans residues 46-66 (FGFAMCSYALDFFSDIGIAIF). Topologically, residues 67–77 (HFWAGRYLSGS) are extracellular. A helical membrane pass occupies residues 78-98 (LVLAFALLPSVIINIISMVWM). At 99-123 (LDDEMHWKRRAHPRRTGTFELNQKR) the chain is on the cytoplasmic side. A helical membrane pass occupies residues 124–144 (FIPLSKMIVLCICQMGPLFWY). At 145 to 219 (YKALYYGWMF…YYQTGTYPYW (75 aa)) the chain is on the extracellular side. A helical membrane pass occupies residues 220 to 240 (LYFQAASLLLSIISISWSVVV). At 241-274 (QNRSLRMIRDDKVNIWPHEAVLQFCWRFLTILAR) the chain is on the cytoplasmic side. A run of 2 helical transmembrane segments spans residues 275–295 (IITLVALVLIFGINVVPLISV) and 296–316 (HLLVTLVHVIFLQAIHIDACT). Residue His-317 is a topological domain, extracellular. The chain crosses the membrane as a helical span at residues 318–338 (IEKLLLLINTFIHIFIPFNMV). Topologically, residues 339-353 (EGNTRWRYLTAYSVE) are cytoplasmic. A helical membrane pass occupies residues 354 to 374 (FIEMMLVCWLLPLSLNTFPYI). Over 375–378 (EKVQ) the chain is Extracellular. A helical transmembrane segment spans residues 379–399 (VGVPISFIAGIAIMMMYYQFF). At 400–458 (HPNRRQLIVTQSQEDLSLNVQKSVETLTPKLESSLEISGEQNTSQDLVSELLLDVEHEN) the chain is on the cytoplasmic side.

Belongs to the XK family. Post-translationally, cleavage by ced-3 activates ced-8 function in promoting phosphatidylserine exposure at the surface of apoptotic cells.

The protein resides in the cell membrane. The catalysed reaction is a 1,2-diacyl-sn-glycero-3-phospho-L-serine(in) = a 1,2-diacyl-sn-glycero-3-phospho-L-serine(out). In terms of biological role, phospholipid scramblase that acts downstream of ced-9 and caspase ced-3 to promote phosphatidylserine exposure on apoptotic cell surface. Phosphatidylserine is a specific marker only present at the surface of apoptotic cells and acts as a specific signal for engulfment. Regulates apoptosis kinetics during embryonic development. Not required for engulfment of germ cell corpses. This is Cell death abnormality protein 8 from Caenorhabditis elegans.